The following is a 118-amino-acid chain: UPF0295 protein BT9727_0449 (118 aa).

The next 2 membrane-spanning stretches (helical) occupy residues 12-32 (IRTFALSLVFIGLFIAYLGVF) and 43-63 (FMMVGFLAVIASTVVYFWIGM).

It belongs to the UPF0295 family.

Its subcellular location is the cell membrane. In Bacillus thuringiensis subsp. konkukian (strain 97-27), this protein is UPF0295 protein BT9727_0449.